Here is a 176-residue protein sequence, read N- to C-terminus: Ribosome maturation factor RimM (176 aa).

The 74-residue stretch at 100-173 folds into the PRC barrel domain; it reads PGEFHLLDLL…WLMVCPPPGL (74 aa).

It belongs to the RimM family. Binds ribosomal protein uS19.

The protein resides in the cytoplasm. Functionally, an accessory protein needed during the final step in the assembly of 30S ribosomal subunit, possibly for assembly of the head region. Essential for efficient processing of 16S rRNA. May be needed both before and after RbfA during the maturation of 16S rRNA. It has affinity for free ribosomal 30S subunits but not for 70S ribosomes. This is Ribosome maturation factor RimM from Prochlorococcus marinus (strain SARG / CCMP1375 / SS120).